The primary structure comprises 567 residues: Dihydroxy-acid dehydratase (567 aa).

Cys-52 is a [2Fe-2S] cluster binding site. Position 84 (Asp-84) interacts with Mg(2+). Cys-125 is a [2Fe-2S] cluster binding site. Mg(2+) contacts are provided by Asp-126 and Lys-127. Position 127 is an N6-carboxylysine (Lys-127). Cys-197 is a [2Fe-2S] cluster binding site. Glu-448 lines the Mg(2+) pocket. Catalysis depends on Ser-474, which acts as the Proton acceptor.

Belongs to the IlvD/Edd family. In terms of assembly, homodimer. [2Fe-2S] cluster is required as a cofactor. Requires Mg(2+) as cofactor.

The catalysed reaction is (2R)-2,3-dihydroxy-3-methylbutanoate = 3-methyl-2-oxobutanoate + H2O. It carries out the reaction (2R,3R)-2,3-dihydroxy-3-methylpentanoate = (S)-3-methyl-2-oxopentanoate + H2O. Its pathway is amino-acid biosynthesis; L-isoleucine biosynthesis; L-isoleucine from 2-oxobutanoate: step 3/4. It functions in the pathway amino-acid biosynthesis; L-valine biosynthesis; L-valine from pyruvate: step 3/4. Its function is as follows. Functions in the biosynthesis of branched-chain amino acids. Catalyzes the dehydration of (2R,3R)-2,3-dihydroxy-3-methylpentanoate (2,3-dihydroxy-3-methylvalerate) into 2-oxo-3-methylpentanoate (2-oxo-3-methylvalerate) and of (2R)-2,3-dihydroxy-3-methylbutanoate (2,3-dihydroxyisovalerate) into 2-oxo-3-methylbutanoate (2-oxoisovalerate), the penultimate precursor to L-isoleucine and L-valine, respectively. This Streptococcus pneumoniae (strain CGSP14) protein is Dihydroxy-acid dehydratase.